The primary structure comprises 324 residues: Heparan sulfate 2-O-sulfotransferase hst-2 (324 aa).

Over M1–R6 the chain is Cytoplasmic. The chain crosses the membrane as a helical; Signal-anchor for type II membrane protein span at residues K7–L24. Residues K25–S324 are Lumenal-facing. 2 N-linked (GlcNAc...) asparagine glycosylation sites follow: N75 and N94. Active-site residues include H107 and H109. N-linked (GlcNAc...) asparagine glycosylation is present at N161. 2 cysteine pairs are disulfide-bonded: C167/C175 and C188/C194.

It belongs to the sulfotransferase 3 family. As to quaternary structure, homotrimer. As to expression, present in the hypodermis, muscle, distal tip cells (DTCs) and in neurons (at protein level).

It is found in the golgi apparatus membrane. Its function is as follows. Catalyzes the transfer of sulfate to the C2-position of selected hexuronic acid residues within the maturing heparan sulfate (HS). Involved in cell adhesion and guidance by specifically modifying proteoglycans in the extracellular matrix and on the cell surface that are essential for axon migrations. The polypeptide is Heparan sulfate 2-O-sulfotransferase hst-2 (Caenorhabditis elegans).